A 369-amino-acid chain; its full sequence is Tyrosinase-like protein orsC (369 aa).

A signal peptide spans 1–23; sequence MLAFNPLVTALAALIFLFCQANA. 2 residues coordinate Cu cation: histidine 112 and histidine 121. N-linked (GlcNAc...) asparagine glycans are attached at residues asparagine 165, asparagine 179, asparagine 253, and asparagine 272. Histidine 315 serves as a coordination point for Cu cation.

It participates in secondary metabolite biosynthesis. Functionally, tyrosinase-like protein; part of the gene cluster that mediates the biosynthesis of orsellinic acid, as well as of the cathepsin K inhibitors F9775 A and F9775 B. The non-reducing polyketide synthase orsA produces orsellinic acid by condensing acetyl-CoA with 3 malonyl-CoA units. Further modifications by the decarboxylase orsB and the tyrosinase-like protein orsC lead to the production of F9775 A and F9775 B. The functions of orsD and orsE remain unclear since only orsB and orsC are required to convert orsellinic acid into F9775 A and F9775 B. The polypeptide is Tyrosinase-like protein orsC (Emericella nidulans (strain FGSC A4 / ATCC 38163 / CBS 112.46 / NRRL 194 / M139) (Aspergillus nidulans)).